Consider the following 848-residue polypeptide: Translation initiation factor IF-2 (848 aa).

Residues 1-10 (MSENNNDKIT) show a composition bias toward basic and acidic residues. Disordered regions lie at residues 1 to 79 (MSEN…EKPV) and 121 to 163 (AERQ…LFSS). The segment covering 17-33 (LKRSGSETNTVKQNFNH) has biased composition (polar residues). Residues 121–138 (AERQAAEKQAKESEEGLH) are compositionally biased toward basic and acidic residues. The segment covering 149–163 (KSSSNTTKPTPLFSS) has biased composition (polar residues). The region spanning 346–513 (TRPPIVTIMG…AILLQAEILD (168 aa)) is the tr-type G domain. The G1 stretch occupies residues 355 to 362 (GHVDHGKT). 355–362 (GHVDHGKT) is a binding site for GTP. The G2 stretch occupies residues 380–384 (GITQH). Residues 401-404 (DTPG) are G3. GTP-binding positions include 401–405 (DTPGH) and 455–458 (NKID). The interval 455 to 458 (NKID) is G4. Residues 491 to 493 (SAK) form a G5 region.

It belongs to the TRAFAC class translation factor GTPase superfamily. Classic translation factor GTPase family. IF-2 subfamily.

It is found in the cytoplasm. One of the essential components for the initiation of protein synthesis. Protects formylmethionyl-tRNA from spontaneous hydrolysis and promotes its binding to the 30S ribosomal subunits. Also involved in the hydrolysis of GTP during the formation of the 70S ribosomal complex. This chain is Translation initiation factor IF-2, found in Bartonella bacilliformis (strain ATCC 35685 / KC583 / Herrer 020/F12,63).